A 367-amino-acid polypeptide reads, in one-letter code: Isocitrate dehydrogenase [NAD] regulatory subunit 1, mitochondrial (367 aa).

Residues 1–25 (MSRRSLTLLKNLARNANGSGIQTRS) constitute a mitochondrion transit peptide.

It belongs to the isocitrate and isopropylmalate dehydrogenases family. Heterooligomer of catalytic and regulatory subunits. As to expression, ubiquitous. Predominantly expressed in roots, stems and leaves.

The protein localises to the mitochondrion. Performs an essential role in the oxidative function of the citric acid cycle. This Arabidopsis thaliana (Mouse-ear cress) protein is Isocitrate dehydrogenase [NAD] regulatory subunit 1, mitochondrial (IDH1).